The primary structure comprises 362 residues: 3-dehydroquinate synthase (362 aa).

NAD(+) is bound by residues 71 to 76, 105 to 109, 129 to 130, K142, K151, and 169 to 172; these read DGERYK, GVIGD, TT, and CLKT. Zn(2+)-binding residues include E184, H247, and H264.

It belongs to the sugar phosphate cyclases superfamily. Dehydroquinate synthase family. Co(2+) is required as a cofactor. The cofactor is Zn(2+). It depends on NAD(+) as a cofactor.

The protein localises to the cytoplasm. It carries out the reaction 7-phospho-2-dehydro-3-deoxy-D-arabino-heptonate = 3-dehydroquinate + phosphate. It participates in metabolic intermediate biosynthesis; chorismate biosynthesis; chorismate from D-erythrose 4-phosphate and phosphoenolpyruvate: step 2/7. Catalyzes the conversion of 3-deoxy-D-arabino-heptulosonate 7-phosphate (DAHP) to dehydroquinate (DHQ). The chain is 3-dehydroquinate synthase from Salmonella arizonae (strain ATCC BAA-731 / CDC346-86 / RSK2980).